An 817-amino-acid chain; its full sequence is Dual specificity tyrosine-phosphorylation-regulated kinase mbk-2 (817 aa).

Disordered regions lie at residues 1-46 (MAAL…HECP), 70-148 (PTSF…GPLG), 186-206 (GSYE…GSQQ), and 301-396 (LPNV…FRPE). Over residues 7–25 (FTRNSRSYGQQPIDVTQQG) the composition is skewed to polar residues. 2 stretches are compositionally biased toward low complexity: residues 70-81 (PTSFSGASSSSS) and 97-111 (NLLG…SNSL). Composition is skewed to polar residues over residues 122–143 (SGNT…TNNL) and 193–206 (GQAQ…GSQQ). A compositionally biased stretch (low complexity) spans 303 to 318 (NVGTSSSNGSSNSSSG). Positions 327-351 (LMTQSIGGPNKHLSASHSTLNTAST) are enriched in polar residues. A Phosphoserine; by cdk-1 modification is found at Ser362. The segment covering 364-392 (SNESLSRSHTSSSGGSQGGHNSNSGSNSG) has biased composition (low complexity). In terms of domain architecture, Protein kinase spans 461 to 774 (YEVLKVIGKG…PAQALKHKWL (314 aa)). ATP is bound by residues 467–475 (IGKGSFGQV) and Lys490. The active-site Proton acceptor is the Asp587. A Phosphotyrosine; by autocatalysis modification is found at Tyr621.

This sequence belongs to the protein kinase superfamily. CMGC Ser/Thr protein kinase family. MNB/DYRK subfamily. Part of a complex, consisting of pseudophosphatases egg-3, egg-4, egg-5 and kinase mbk-2; this complex is required for the oocyte-to-zygote transition. Interacts (via Tyr-619 and Tyr-621) with egg-4 (via tyrosine-protein phosphatase domain) and egg-5 (via tyrosine-protein phosphatase domain); mbk-2 tyrosine phosphorylation enhances the interaction. The interaction inhibits mbk-2 kinase activity and is required for mbk-2 oocyte cortex localization. Interacts (via N-terminus) with egg-3 (via tyrosine-protein phosphatase domain); the interaction does not affect mbk-2 kinase activity, is enhanced by mbk-2 tyrosine phosphorylation status and requires prior binding of mbk-2 to egg-4 and egg-5. Requires Mg(2+) as cofactor. In terms of processing, autophosphorylated. In L1 larvae, expressed widely in the nervous system, including head neurons and the ventral nerve cord. In adult animals, continues to be expressed in the nervous system and is also expressed in body wall muscle.

The protein localises to the cytoplasm. It localises to the cell cortex. It carries out the reaction L-seryl-[protein] + ATP = O-phospho-L-seryl-[protein] + ADP + H(+). The enzyme catalyses L-threonyl-[protein] + ATP = O-phospho-L-threonyl-[protein] + ADP + H(+). It catalyses the reaction L-tyrosyl-[protein] + ATP = O-phospho-L-tyrosyl-[protein] + ADP + H(+). Its activity is regulated as follows. Activated during oocyte maturation by phosphorylation on Ser-362 by cdk-1. The pseudotyrosine phosphatases egg-4 and egg-5 sequester activated mbk-2 until the meiotic divisions and inhibit mbk-2 kinase activity directly, using a mixed-inhibition mechanism that does not involve tyrosine dephosphorylation. Functionally, required for oocyte-to-zygote transition in which it phosphorylates oocyte proteins, including mei-1, oma-1, oma-2, mex-5, and mex-6, modifying their activity and/or stability following meiosis. Through phosphorylation of P granule components including meg-1, promotes the disassembly of zygotic P granules in the anterior cytoplasm during zygote polarization, and thus plays a role in P granule distribution and segregation in early stage embryos following meiosis. Functions in both spindle positioning and in the posterior localization of cytoplasmic determinants, including pie-1, pos-1, and pgl-1, in early embryos. Involved in the asymmetric distribution of plk-1 at the 2-cell embryonic stage. This is Dual specificity tyrosine-phosphorylation-regulated kinase mbk-2 from Caenorhabditis elegans.